The primary structure comprises 142 residues: Large ribosomal subunit protein uL11 (142 aa).

The protein belongs to the universal ribosomal protein uL11 family. Part of the ribosomal stalk of the 50S ribosomal subunit. Interacts with L10 and the large rRNA to form the base of the stalk. L10 forms an elongated spine to which L12 dimers bind in a sequential fashion forming a multimeric L10(L12)X complex. In terms of processing, one or more lysine residues are methylated.

Forms part of the ribosomal stalk which helps the ribosome interact with GTP-bound translation factors. The polypeptide is Large ribosomal subunit protein uL11 (Nitrobacter hamburgensis (strain DSM 10229 / NCIMB 13809 / X14)).